Reading from the N-terminus, the 412-residue chain is Argininosuccinate synthase (412 aa).

8 to 16 contacts ATP; sequence AYSGGLDTS. Position 87 (tyrosine 87) interacts with L-citrulline. Glycine 117 contributes to the ATP binding site. L-aspartate contacts are provided by threonine 119, asparagine 123, and aspartate 124. Asparagine 123 contributes to the L-citrulline binding site. Positions 127, 175, 259, and 271 each coordinate L-citrulline.

The protein belongs to the argininosuccinate synthase family. Type 1 subfamily. In terms of assembly, homotetramer.

It is found in the cytoplasm. It catalyses the reaction L-citrulline + L-aspartate + ATP = 2-(N(omega)-L-arginino)succinate + AMP + diphosphate + H(+). Its pathway is amino-acid biosynthesis; L-arginine biosynthesis; L-arginine from L-ornithine and carbamoyl phosphate: step 2/3. This Clavibacter michiganensis subsp. michiganensis (strain NCPPB 382) protein is Argininosuccinate synthase.